The following is a 455-amino-acid chain: Argininosuccinate synthase (455 aa).

ATP-binding positions include 17–25 (AFSGGLDTS) and alanine 43. Tyrosine 99 is an L-citrulline binding site. ATP is bound by residues glycine 129 and threonine 131. Threonine 131, asparagine 135, and aspartate 136 together coordinate L-aspartate. Asparagine 135 contacts L-citrulline. Aspartate 136 contacts ATP. The L-citrulline site is built by arginine 139 and serine 192. Aspartate 194 is a binding site for ATP. 3 residues coordinate L-citrulline: threonine 201, glutamate 203, and glutamate 280. Residues 434-448 (TGLPQVDNNNLSSGR) are compositionally biased toward polar residues. Residues 434-455 (TGLPQVDNNNLSSGRGLQDKRQ) form a disordered region.

The protein belongs to the argininosuccinate synthase family. Type 2 subfamily. In terms of assembly, homotetramer.

The protein resides in the cytoplasm. The catalysed reaction is L-citrulline + L-aspartate + ATP = 2-(N(omega)-L-arginino)succinate + AMP + diphosphate + H(+). Its pathway is amino-acid biosynthesis; L-arginine biosynthesis; L-arginine from L-ornithine and carbamoyl phosphate: step 2/3. In Yersinia pestis, this protein is Argininosuccinate synthase (argG).